A 610-amino-acid chain; its full sequence is MDEDYYSAVRAQSPKTYLYALTAETHLGEVASVIITTLLASGRLNIKQISVKTKLAIKSIKSAIVSLIQLNCLYYWQDDKNPTIFYYSVNETGLKTLVYSGDILNHITQEYGDEEAEIIQNIIMNGHLKLDDYLRQYDNDLEKSDEASLRLEKEKIFLKLYNEGWIKILSLNDFHHINDIWEKLFDDTLRNTPRSSTTSEVKRLAEAQSVCKEKLMALLEKTKQPLDLYITENGYKKLNPNLVLTFNLTRFQKRSRTVALTNLAKSRIGLITSKVYEAALKSVENGSPDLSHPFLEIPGLINNPTDVKDFKDSLETTLTAEKKIVFTVKDVMRYFPKLLDIKNSVITENSKRSFNDINANPETSNKKIKLENGNAFNTGGGASGANTSNSNNHLTASSFFTDEDRMSIIEQHLRLLAAGTNTQFVHEISPGRYAIPFVKLSNELKQFHYESLVKSTLQDQAFRVLRCIKHLKLADEKSIANAVLLKEKTVRNEVYQLIKANVVEIQEIPRSVDRAASKTFYLVKYKEYHRFESLINCLVYNMAEIVRNIQNFKMENKILLDKCNRVDVEGNEDEMLLDSELKTLHGLQNREVMNLVRFNRTRSLWDIFTL.

The segment at 538–559 (LVYNMAEIVRNIQNFKMENKIL) is leucine-zipper.

It belongs to the RNA polymerase beta chain family. In terms of assembly, component of the RNA polymerase III (Pol III) complex consisting of 17 subunits.

Its subcellular location is the nucleus. DNA-dependent RNA polymerase catalyzes the transcription of DNA into RNA using the four ribonucleoside triphosphates as substrates. Specific core component of RNA polymerase III which synthesizes small RNAs, such as 5S rRNA and tRNAs. This is DNA-directed RNA polymerase III subunit RPC3 (RPC82) from Lodderomyces elongisporus (strain ATCC 11503 / CBS 2605 / JCM 1781 / NBRC 1676 / NRRL YB-4239) (Yeast).